The sequence spans 334 residues: Adenosine deaminase (334 aa).

Positions 12 and 14 each coordinate Zn(2+). Substrate contacts are provided by H14, D16, and G170. Position 197 (H197) interacts with Zn(2+). E200 serves as the catalytic Proton donor. D278 provides a ligand contact to Zn(2+). D279 provides a ligand contact to substrate.

Belongs to the metallo-dependent hydrolases superfamily. Adenosine and AMP deaminases family. Adenosine deaminase subfamily. The cofactor is Zn(2+).

The enzyme catalyses adenosine + H2O + H(+) = inosine + NH4(+). The catalysed reaction is 2'-deoxyadenosine + H2O + H(+) = 2'-deoxyinosine + NH4(+). In terms of biological role, catalyzes the hydrolytic deamination of adenosine and 2-deoxyadenosine. This chain is Adenosine deaminase, found in Vibrio cholerae serotype O1 (strain ATCC 39541 / Classical Ogawa 395 / O395).